The chain runs to 326 residues: MASSRVILALLLAAAAVMASSAQLDEKFYSNSCPSVEAVVRKEMVRALGAAPSLAGPLLRMHFHDCFVRGCDGSVLLDSAGNSTAEKDATPNQTLRGFGFVERVKAAVEKACPGTVSCADVLALMARDAVWLSKGPFWAVPLGRRDGRVSIANETDQLPPPTANFTELTQMFAAKNLDLKDLVVLSAGHTIGTSHCFSFTDRLYNFTGLDNAHDIDPTLELQYMARLRSKCTSLQDNTTLVEMDPGSFKTFDLGYFKNVAKRRGLFHSDGELLTNGFTRAYVQRHAGGGYKDEFFADFAASMVKMGGVEVLTGSQGEIRKKCNVVN.

The N-terminal stretch at 1 to 22 (MASSRVILALLLAAAAVMASSA) is a signal peptide. A Pyrrolidone carboxylic acid modification is found at Q23. 4 cysteine pairs are disulfide-bonded: C33/C112, C66/C71, C118/C322, and C196/C231. The active-site Proton acceptor is the H64. Residues D65, V68, G70, D72, and S74 each contribute to the Ca(2+) site. N-linked (GlcNAc...) asparagine glycans are attached at residues N82 and N153. Position 159 (P159) interacts with substrate. A glycan (N-linked (GlcNAc...) asparagine) is linked at N164. Residue H189 coordinates heme b. T190 provides a ligand contact to Ca(2+). N205 and N237 each carry an N-linked (GlcNAc...) asparagine glycan. Ca(2+) contacts are provided by D244, S247, and D252.

The protein belongs to the peroxidase family. Classical plant (class III) peroxidase subfamily. Ca(2+) serves as cofactor. It depends on heme b as a cofactor.

Its subcellular location is the secreted. The catalysed reaction is 2 a phenolic donor + H2O2 = 2 a phenolic radical donor + 2 H2O. Removal of H(2)O(2), oxidation of toxic reductants, biosynthesis and degradation of lignin, suberization, auxin catabolism, response to environmental stresses such as wounding, pathogen attack and oxidative stress. These functions might be dependent on each isozyme/isoform in each plant tissue. The sequence is that of Peroxidase 1 (PRX74) from Oryza sativa subsp. japonica (Rice).